Consider the following 328-residue polypeptide: Putative lipase LIH1 (328 aa).

Ser181 (nucleophile) is an active-site residue. Catalysis depends on charge relay system residues Asp253 and His315.

It belongs to the AB hydrolase superfamily. Lipase family.

It catalyses the reaction a triacylglycerol + H2O = a diacylglycerol + a fatty acid + H(+). Functionally, lipases catalyze the hydrolysis of the ester bond of tri-, di- and monoglycerides of long-chain fatty acids into fatty acids and glycerol. This Saccharomyces cerevisiae (strain ATCC 204508 / S288c) (Baker's yeast) protein is Putative lipase LIH1.